Reading from the N-terminus, the 198-residue chain is Recombination protein RecR (198 aa).

Residues 57 to 72 (CRQCRTLSEEELCPQC) form a C4-type zinc finger. One can recognise a Toprim domain in the interval 80 to 174 (SLLCVVEGPL…TLSRIAHGVP (95 aa)).

This sequence belongs to the RecR family.

Its function is as follows. May play a role in DNA repair. It seems to be involved in an RecBC-independent recombinational process of DNA repair. It may act with RecF and RecO. The sequence is that of Recombination protein RecR from Pseudomonas aeruginosa (strain LESB58).